A 710-amino-acid polypeptide reads, in one-letter code: uncharacterized protein (710 aa).

The segment at 1–40 (MSESDGAFKSPSLPPSHHAPAPMSPEKIRAPAEQMDGPVE) is disordered. Low complexity predominate over residues 15-25 (PSHHAPAPMSP). One can recognise an FHA domain in the interval 108–165 (VVIGRIKPGCDLLMEHPSISRYHCILQYGNDKMSKTGKGWHIFELGSTHGSRMNKKRL). 3 coiled-coil regions span residues 206–240 (TEMK…KEEE), 409–440 (ETDT…LSAG), and 471–502 (AKTK…KIAK). Residues 230–250 (IDDEKREKEEEGCGWGMDYGE) form a disordered region. Disordered stretches follow at residues 535–560 (EIDQ…APTS), 591–619 (KNSL…AFGS), and 671–710 (EDYG…AGRY). A compositionally biased stretch (polar residues) spans 538–560 (QTPSQGPGPSTSATLPATVAPTS). Positions 613–661 (QKEAFGSKVQKRVAQWEEELEAEKEELAKKQKLEAEEEAKKKVQRVRRR) form a coiled coil.

This is an uncharacterized protein from Caenorhabditis elegans.